The sequence spans 572 residues: MVRTRLAISVVLVSTLLLLNVKAKSVDPYKVLGVSKDAKQREIQKAFHKQSLKYHPDKNKDKGAQEKFAEINNAYEILSDEEKRKNYDLYGDEKGQPGFDSGFPGGNGGYSYSSSGGGFNFGGPGGWQNMGGGGGSKSFSFSFGGPSESSFGFGMDDIFSMFSGGSSKGKEQFGGFGSSSNAESKSKSSTVAAIKTINSQVYKKDVVDQGMTWLLLSYLPSQRGSQYHESIIEEVAESLQGALKVGRLNCETESSLCKQLGIVPRRAPRMFVYSYTSSGKATLAEYTEELVAKKVKSFCQEHLPRFSKKIDLNTFDVSAVSSQKTPKVLLLSTKKDTPVIWRVLSGLYNGRFVFYNTEVHDTSDPKIQKLGVDKFPAIVGWLSNGEKQVLKTGITVKNLKSAVQELGKLLEGLEKKNKKVSSKSQAGQAPNESSEKIPLLSRPNFDSICGENTPVCIIGAFRSSNGKEKLQSIMSKVSQKSLSRRQASTTGSQDTVSYSLLDATKQSAFLSSLDKSEFKTSSDKLLIAYKPRRGKFATFKGDMTIEEVEKFVAAVLNGDIQFTKTRQKPQIK.

The first 23 residues, 1–23 (MVRTRLAISVVLVSTLLLLNVKA), serve as a signal peptide directing secretion. In terms of domain architecture, J spans 27 to 91 (DPYKVLGVSK…EKRKNYDLYG (65 aa)). Positions 394–423 (ITVKNLKSAVQELGKLLEGLEKKNKKVSSK) form a coiled coil. Residues 419-439 (KVSSKSQAGQAPNESSEKIPL) are disordered. The segment covering 422–432 (SKSQAGQAPNE) has biased composition (polar residues). A glycan (N-linked (GlcNAc...) asparagine) is linked at Asn431.

Interacts with BIP1 and BIP3. The interaction with BIP1 and BIP3 activates the ATPase enzyme activities of BIP1 and BIP3. In terms of processing, not N-glycosylated. Expressed in roots, leaves, stems, flowers, mature pollen grains and growing pollen tubes.

The protein resides in the endoplasmic reticulum lumen. Regulates protein folding in the endoplasmic reticulum (ER) lumen. Functions probably as a co-molecular chaperone that is required for normal growth of pollen tubes under high-temperature stress. The chain is DnaJ protein ERDJ3A (ERDJ3A) from Arabidopsis thaliana (Mouse-ear cress).